Reading from the N-terminus, the 218-residue chain is MAQALPPLPYDYGSLEPHVDATTMNIHHTKHHQTYVNNLNAALDKFPELKDLGLVDLNKAVGTDKLPKDVATVIRNNGGGHYNHSFFWKVMTNPSNTNGPNGDVKAAIEASFGSVDEMKAKFNAAAAGRFGSGWAWLSVKPDGSLSIDSTPNQDNPLMTALPDVAGGIPLLGLDVWEHAYYLKYQNRRPEYIAAWWNVVNWEQVAENYKAAQAGTVPL.

Residues H27, H84, D174, and H178 each coordinate Mn(2+).

This sequence belongs to the iron/manganese superoxide dismutase family. Homotetramer. The cofactor is Mn(2+).

It localises to the mitochondrion matrix. It carries out the reaction 2 superoxide + 2 H(+) = H2O2 + O2. Functionally, destroys superoxide anion radicals which are normally produced within the cells and which are toxic to biological systems. The sequence is that of Superoxide dismutase [Mn], mitochondrial (SODA) from Chlamydomonas reinhardtii (Chlamydomonas smithii).